Here is a 500-residue protein sequence, read N- to C-terminus: Lysine--tRNA ligase (500 aa).

Mg(2+)-binding residues include glutamate 410 and glutamate 417.

Belongs to the class-II aminoacyl-tRNA synthetase family. Homodimer. Mg(2+) serves as cofactor.

It is found in the cytoplasm. It catalyses the reaction tRNA(Lys) + L-lysine + ATP = L-lysyl-tRNA(Lys) + AMP + diphosphate. The protein is Lysine--tRNA ligase of Shewanella piezotolerans (strain WP3 / JCM 13877).